The sequence spans 1128 residues: Glutamate receptor-interacting protein 1 (1128 aa).

Residue Ser43 is modified to Phosphoserine. PDZ domains follow at residues 53 to 136 (VVEL…EYEL), 150 to 238 (TVEV…EYDV), 252 to 336 (LVEV…LPHH), 472 to 561 (EVVL…EFDV), 573 to 658 (HVKL…RKDE), and 673 to 755 (TVEL…KKQT). 2 disordered regions span residues 754–798 (QTDA…YPST) and 935–981 (MSLN…GRKS). The span at 944–974 (PRSQLGRQASFQERSSSRPHYSQTTRSNTLP) shows a compositional bias: polar residues. The region spanning 1004–1086 (KVTLYKDSDM…KLDLVISRNP (83 aa)) is the PDZ 7 domain. Polar residues predominate over residues 1093-1115 (IDQQSLPGDWSEQNSAFFQQPSH). The tract at residues 1093–1128 (IDQQSLPGDWSEQNSAFFQQPSHGGNLETREPTNTL) is disordered.

As to quaternary structure, interacts with EPHA7, EPHB2, KIF5A, KIF5B, KIF5C, GRIA2, GRIA3, GRIPAP1/GRASP1, PPFIA1, PPFIA4, FRAS1, PLCD4, PTPRF and liprins-alpha. Can form homomultimers or heteromultimers with GRIP2. Forms a ternary complex with GRIA2 and CSPG4. Interacts with ATAD1 in an ATP-dependent manner. ATAD1-catalyzed ATP hydrolysis disrupts binding to ATAD1 and to GRIA2 and leads to AMPAR complex disassembly. Interacts with EFNB1, EFNB3 and the C-terminal tail of PRLHR. Interacts with SLC30A9. Interacts with BUD23. Forms a complex with NSG1, GRIA2 and STX12; controls the intracellular fate of AMPAR and the endosomal sorting of the GRIA2 subunit toward recycling and membrane targeting. Interacts with NSG1.

Its subcellular location is the cytoplasmic vesicle. It localises to the perikaryon. The protein localises to the cell projection. The protein resides in the dendrite. It is found in the cytoplasm. Its subcellular location is the endomembrane system. It localises to the postsynaptic cell membrane. The protein localises to the postsynaptic density. The protein resides in the endoplasmic reticulum membrane. Its function is as follows. May play a role as a localized scaffold for the assembly of a multiprotein signaling complex and as mediator of the trafficking of its binding partners at specific subcellular location in neurons. Through complex formation with NSG1, GRIA2 and STX12 controls the intracellular fate of AMPAR and the endosomal sorting of the GRIA2 subunit toward recycling and membrane targeting. The protein is Glutamate receptor-interacting protein 1 (GRIP1) of Homo sapiens (Human).